A 667-amino-acid polypeptide reads, in one-letter code: Single-minded homolog 2 (667 aa).

A bHLH domain is found at methionine 1–arginine 53. PAS domains follow at residues alanine 77 to histidine 149 and proline 218 to glycine 288. The PAC domain maps to threonine 292–isoleucine 335. One can recognise a Single-minded C-terminal domain in the interval glutamate 336–arginine 667. 3 disordered regions span residues tryptophan 356 to glutamine 389, alanine 409 to serine 428, and serine 500 to leucine 520. Residues arginine 367–tyrosine 386 carry the Nuclear localization signal motif. The segment covering leucine 369–leucine 381 has biased composition (basic residues). Low complexity predominate over residues alanine 409–proline 419.

In terms of assembly, efficient DNA binding requires dimerization with another bHLH protein. Heterodimer of SIM2 and ARNT.

The protein resides in the nucleus. In terms of biological role, transcription factor that may be a master gene of CNS development in cooperation with Arnt. It may have pleiotropic effects in the tissues expressed during development. The chain is Single-minded homolog 2 (SIM2) from Homo sapiens (Human).